Here is a 184-residue protein sequence, read N- to C-terminus: Mitochondrial translation release factor in rescue (184 aa).

Residues 1–98 (MSSRSTWALL…HVPSGIVVKC (98 aa)) constitute a mitochondrion transit peptide. Residues 60–124 (ESELEEQFVK…LQEKVDVFYN (65 aa)) form a GGQ domain region. Residues 74-76 (GGQ) carry the GGQ motif. The residue at position 76 (Gln76) is an N5-methylglutamine. Residues 130-178 (VHKEKLEAERRKRERKKRAKETLEKKKLLKELREASQNITEKKADADGI) are a coiled coil. A disordered region spans residues 132–184 (KEKLEAERRKRERKKRAKETLEKKKLLKELREASQNITEKKADADGIPRGFQE). A compositionally biased stretch (basic and acidic residues) spans 149–184 (KETLEKKKLLKELREASQNITEKKADADGIPRGFQE).

It belongs to the prokaryotic/mitochondrial release factor family. As to quaternary structure, interacts (via C-terminus) with MTRES1 (via S4 domain). Associates with mitoribosomal S39 large subunit, peptidyl tRNA and nascent chain. Post-translationally, methylation of glutamine in the GGQ triplet by HEMK1.

Its subcellular location is the mitochondrion. Part of a mitoribosome-associated quality control pathway that prevents aberrant translation by responding to interruptions during elongation. As heterodimer with MTRES1, ejects the unfinished nascent chain and peptidyl transfer RNA (tRNA), respectively, from stalled ribosomes. Recruitment of mitoribosome biogenesis factors to these quality control intermediates suggests additional roles for MTRES1 and MTRF during mitoribosome rescue. The sequence is that of Mitochondrial translation release factor in rescue from Mus musculus (Mouse).